A 528-amino-acid chain; its full sequence is Tyrosine-protein kinase transforming protein Yes (528 aa).

Over residues 1–12 the composition is skewed to basic and acidic residues; that stretch reads DKGPAMKYRTDN. Positions 1-35 are disordered; it reads DKGPAMKYRTDNTPEPISSHVSHYGSDSSQATQSP. Low complexity predominate over residues 18–29; that stretch reads SSHVSHYGSDSS. An SH3 domain is found at 81-142; the sequence is GGGTVFVALY…PSNYVAPADS (62 aa). Residues 148–245 enclose the SH2 domain; the sequence is WYFGKMGRKD…GLCHKLTTVC (98 aa). Positions 267 to 520 constitute a Protein kinase domain; sequence LRLEVKLGQG…YIQSFLEDYF (254 aa). Residues 273–281 and K295 contribute to the ATP site; that span reads LGQGCFGEV. Catalysis depends on D386, which acts as the Proton acceptor. Y416 is subject to Phosphotyrosine; by autocatalysis.

It belongs to the protein kinase superfamily. Tyr protein kinase family. SRC subfamily.

It catalyses the reaction L-tyrosyl-[protein] + ATP = O-phospho-L-tyrosyl-[protein] + ADP + H(+). In Galliformes (Y73SV), this protein is Tyrosine-protein kinase transforming protein Yes (V-YES).